Reading from the N-terminus, the 687-residue chain is Bifunctional lysine-specific demethylase and histidyl-hydroxylase NO66 (687 aa).

A disordered region spans residues 1–174 (MSDKNKKVSA…RSCPLPSKKN (174 aa)). Residues 23 to 32 (DVQKGTKNSD) are compositionally biased toward basic and acidic residues. 2 stretches are compositionally biased toward low complexity: residues 33–50 (KNGA…SKNG) and 58–74 (KKNG…SSSS). Positions 75–96 (GEDEEDDSTDSSDEYESSESGE) are enriched in acidic residues. 2 stretches are compositionally biased toward polar residues: residues 100–116 (LNSH…ANTR) and 136–156 (RTSS…QQPK). The region spanning 347–483 (NPSSYLVQLR…NLMEKLMPLV (137 aa)) is the JmjC domain. 3 residues coordinate Fe cation: His387, Asp389, and His449.

Belongs to the ROX family. NO66 subfamily. Fe(2+) is required as a cofactor.

Its subcellular location is the nucleus. The enzyme catalyses N(6),N(6)-dimethyl-L-lysyl(36)-[histone H3] + 2 2-oxoglutarate + 2 O2 = L-lysyl(36)-[histone H3] + 2 formaldehyde + 2 succinate + 2 CO2. Functionally, oxygenase that can act as both a histone lysine demethylase and a ribosomal histidine hydroxylase. Specifically demethylates 'Lys-4' (H3K4me) and 'Lys-36' (H3K36me) of histone H3, thereby playing a central role in histone code. The sequence is that of Bifunctional lysine-specific demethylase and histidyl-hydroxylase NO66 from Drosophila persimilis (Fruit fly).